The sequence spans 505 residues: Cytochrome P450 monooxygenase efuB (505 aa).

The helical transmembrane segment at 12–34 threads the bilayer; the sequence is GFWPTVAGTVATYLFYQIVATVY. Cys450 is a heme binding site.

It belongs to the cytochrome P450 family. It depends on heme as a cofactor.

It localises to the membrane. Its pathway is secondary metabolite biosynthesis; terpenoid biosynthesis. Functionally, cytochrome P450 monooxygenase; part of the gene cluster that mediates the biosynthesis of enfumafungin, a glycosylated fernene-type triterpenoid with potent antifungal activity, mediated by its interaction with beta-1,3-glucan synthase and the fungal cell wall. The pathway begins with the terpene cyclase-glycosyl transferase fusion protein that most likely uses 2,3-oxidosqualene as substrate and catalyzes glycosylation immediately after cyclization. The fernene glycoside then could be processed by the desaturase efuI which catalyzes isomerization of a double bond established by efuA to form the core structure. The latter would then undergo a series of hydroxylations in unknown order at C-2, C-19, C-23 and C-25, which would be catalyzed by two of the three cytochrome P450 monooxygenases efuB, efuG or efuH. The hydroxy-group at C-25 becomes oxidized by the dehydrogenase efuE to enable a spontaneous, non-enzymatic hemiacetal formation with C-23. After hydroxylation at C-2, acetylation by the acetyltransferase efuC takes place. The final steps in enfumafungin biosynthesis require expansion of the 5-membered ring by lactonization via a Baeyer-Villiger reaction mediated by one of the BGC's cytochrome P450 monooxygenases (efuB, efuG or efuH) followed by ring cleavage. This type of reaction would establish a double bond between C-20 and C-21 which could be reduced by the reductase efuL to form the final product. The sequence is that of Cytochrome P450 monooxygenase efuB from Hormonema carpetanum.